The following is a 222-amino-acid chain: Ribosome maturation factor RimM (222 aa).

Positions 1–22 are disordered; sequence MTERKQGAARPLNRPLVQPQGE. The region spanning 145 to 222 is the PRC barrel domain; sequence EDEFYWVDLI…RIVVDWGLDY (78 aa).

This sequence belongs to the RimM family. Binds ribosomal protein uS19.

It is found in the cytoplasm. An accessory protein needed during the final step in the assembly of 30S ribosomal subunit, possibly for assembly of the head region. Essential for efficient processing of 16S rRNA. May be needed both before and after RbfA during the maturation of 16S rRNA. It has affinity for free ribosomal 30S subunits but not for 70S ribosomes. In Cupriavidus necator (strain ATCC 17699 / DSM 428 / KCTC 22496 / NCIMB 10442 / H16 / Stanier 337) (Ralstonia eutropha), this protein is Ribosome maturation factor RimM.